Here is a 429-residue protein sequence, read N- to C-terminus: 3-phosphoshikimate 1-carboxyvinyltransferase (429 aa).

3-phosphoshikimate is bound by residues Lys-20, Ser-21, and Arg-25. Phosphoenolpyruvate is bound at residue Lys-20. Phosphoenolpyruvate is bound by residues Gly-89 and Arg-118. 3-phosphoshikimate-binding residues include Ser-164, Ser-165, Gln-166, Ser-192, Asp-311, and Lys-338. Gln-166 is a phosphoenolpyruvate binding site. Residue Asp-311 is the Proton acceptor of the active site. 2 residues coordinate phosphoenolpyruvate: Arg-342 and Arg-384.

It belongs to the EPSP synthase family. In terms of assembly, monomer.

It is found in the cytoplasm. It carries out the reaction 3-phosphoshikimate + phosphoenolpyruvate = 5-O-(1-carboxyvinyl)-3-phosphoshikimate + phosphate. The protein operates within metabolic intermediate biosynthesis; chorismate biosynthesis. In terms of biological role, catalyzes the transfer of the enolpyruvyl moiety of phosphoenolpyruvate (PEP) to the 5-hydroxyl of shikimate-3-phosphate (S3P) to produce enolpyruvyl shikimate-3-phosphate and inorganic phosphate. This chain is 3-phosphoshikimate 1-carboxyvinyltransferase, found in Methanococcus vannielii (strain ATCC 35089 / DSM 1224 / JCM 13029 / OCM 148 / SB).